The chain runs to 194 residues: Threonylcarbamoyl-AMP synthase (194 aa).

One can recognise a YrdC-like domain in the interval 12–194 (SPNMKDLLIQ…DVMTGKLIRE (183 aa)).

This sequence belongs to the SUA5 family. TsaC subfamily.

The protein resides in the cytoplasm. The enzyme catalyses L-threonine + hydrogencarbonate + ATP = L-threonylcarbamoyladenylate + diphosphate + H2O. Functionally, required for the formation of a threonylcarbamoyl group on adenosine at position 37 (t(6)A37) in tRNAs that read codons beginning with adenine. Catalyzes the conversion of L-threonine, HCO(3)(-)/CO(2) and ATP to give threonylcarbamoyl-AMP (TC-AMP) as the acyladenylate intermediate, with the release of diphosphate. The sequence is that of Threonylcarbamoyl-AMP synthase from Blochmanniella pennsylvanica (strain BPEN).